The sequence spans 363 residues: S-adenosylmethionine:tRNA ribosyltransferase-isomerase (363 aa).

This sequence belongs to the QueA family. Monomer.

It localises to the cytoplasm. It catalyses the reaction 7-aminomethyl-7-carbaguanosine(34) in tRNA + S-adenosyl-L-methionine = epoxyqueuosine(34) in tRNA + adenine + L-methionine + 2 H(+). It functions in the pathway tRNA modification; tRNA-queuosine biosynthesis. Functionally, transfers and isomerizes the ribose moiety from AdoMet to the 7-aminomethyl group of 7-deazaguanine (preQ1-tRNA) to give epoxyqueuosine (oQ-tRNA). The chain is S-adenosylmethionine:tRNA ribosyltransferase-isomerase from Brucella abortus (strain S19).